A 289-amino-acid polypeptide reads, in one-letter code: Paired box protein 5 homolog (289 aa).

The segment at residues 29–155 (SHTGVNQLGG…SSINRIVRNK (127 aa)) is a DNA-binding region (paired). The segment at 32-88 (GVNQLGGVFVNGRPLADTVRAQIVEMSQHGTRPCDISRQLKVSHGCVSKILGRYYST) is PAI subdomain. The tract at residues 107 to 155 (RVVECIAGYKRANPTMFAWEIRQKLIEDQICGEENVPSVSSINRIVRNK) is RED subdomain. Composition is skewed to low complexity over residues 166-179 (SVTS…SATS) and 189-198 (VQQHMQQSTS). The segment at 166 to 198 (SVTSSAARPSSATSHHQRSPPRGVQQHMQQSTS) is disordered.

The protein resides in the nucleus. Its subcellular location is the chromosome. Transcription factor. Binds to specific DNA sequence motifs in regulatory elements, for example in the genes encoding transcription factor lin-48, apoptosis regulator ced-9 and neuropeptide-like protein nlp-2. Specifies cell fate, playing an essential role in embryonic and larval development. Involved in morphogenesis of the vulva and uterus in hermaphrodites and of the rectal epithelium of the tail in males. Plays multiple roles in the development of the egg-laying system, acting in both lin-3/EGF-pathway-dependent and -independent processes. Positively regulates expression of neuropeptide-like proteins nlp-2 and nlp-7 in uvl cells in an EGF-pathway-dependent manner. Involved in negatively modulating apoptosis in germline and somatic cells, acting in partial redundancy with transcription factor pax-2, probably by directly regulating transcription of ced-9. Positively regulates transcription of lin-48 in hindgut cells and functions in the development of the hindgut. The polypeptide is Paired box protein 5 homolog (Caenorhabditis elegans).